The primary structure comprises 740 residues: MEKDLQLRVNEKLDVENILKDLDKYTPKRRGWTWRQPAENLQMGPFIYKDASTPLENSVALPSAKYFGDIDPQPLPVITTEIASGRFEDDIRRMRMAAWHGADHIMVIRTAGQSHYDGLIEGTPQGIGGVPITRKQVRAQRKALDLIEEEVGRPINYHSYVSGVAGPDIAVMFAEEGVNGAHQDPQYNVLYRNINMIRSFIDACESKTIMAWADMAQIDGAHNANATAREAWKVMPELMVQHALNSIFSLKVGMKKSNICLSTVPPTAPPAPSMYLDLPYAVALREMFEGYRMRAQMNTKYMEASTREATVTHVLNLLISKLTRADIQSTITPDEGRNVPWHIYNIEACDTAKQALIGMDGLMDMVQLKREGVLGDTVRELKERAVLFMEEIIEAGGYFNAVEQGFFVDSGYYPERNGDGIARQINGGIGAGTVFERDEDYMAPVTAHFGYNNVKQYDEALVSEPSKLIDGCTLEVPEKIVYIDELDENDNVNVRMEETKEFRHSSMIKPEVEWQADGTVLLTMFLPTSKRVAEFAAIEFAKKMNLEEVEVINREVMQEAEGTRIELKGRVPFSIDINSLVIPPEPEILSEDEIREDIEKTPLKIVAATVGEDEHSVGLREVIDIKHGGIEKYGVEVHYLGTSVPVEKLVDAAIELKADAILASTIISHDDIHYKNMKRIHELAVEKGIRDKIMIGCGGTQVTPEVAVKQGVDAGFGRGSKGIHVATFLVKKRREMREGK.

Substrate is bound by residues glutamate 81, tyrosine 160, histidine 182, and 294-296; that span reads RAQ. One can recognise a B12-binding domain in the interval 602–739; that stretch reads PLKIVAATVG…VKKRREMREG (138 aa). Residues 614–616 and histidine 615 contribute to the adenosylcob(III)alamin site; that span reads EHS. N6-(pyridoxal phosphate)lysine is present on lysine 626. Residues 664–669, threonine 700, and serine 720 contribute to the adenosylcob(III)alamin site; that span reads STIISH.

As to quaternary structure, heterotetramer of 2 alpha (OraS) and 2 beta (OraE) subunits. Adenosylcob(III)alamin serves as cofactor. Pyridoxal 5'-phosphate is required as a cofactor.

The enzyme catalyses D-ornithine = (2R,4S)-2,4-diaminopentanoate. Increased activity in the presence of dithiothreitol (DTT) in vitro. Inhibited by 1 mM potassium phosphate and potassium chloride. Inhibited by L-alpha-ornithine, D,L-alpha-lysine, L-beta-lysine (50%-60%), L-alpha-lysine (26%) and by delta-amino-n-valeric acid to a lesser extent. Significant decrease in activity is observed in the presence of 0.2 mM p-chloromercuribenzoate, N-ethylmaleimide and also by 2 mM iodoacetate to a lesser extent but not inhibited by arsenite. Functionally, component of a complex that catalyzes the reversible migration of the omega amino group of D-ornithine to C-4 to form (2R,4S)-2,4-diaminopentanoic acid. OraE may be the catalytic subunit. Active only on D-ornithine and 2,4-diaminopentanoic acid but not active on L-ornithine, L-beta-lysine, L-alpha-lysine or D-alpha-lysine. This is D-ornithine 4,5-aminomutase subunit beta (oraE) from Acetoanaerobium sticklandii (strain ATCC 12662 / DSM 519 / JCM 1433 / CCUG 9281 / NCIMB 10654 / HF) (Clostridium sticklandii).